The chain runs to 164 residues: NAD(P)H-quinone oxidoreductase subunit I, chloroplastic (164 aa).

4Fe-4S ferredoxin-type domains follow at residues 55–84 (GRIH…VDWK) and 95–124 (LNYS…MTEE). Residues cysteine 64, cysteine 67, cysteine 70, cysteine 74, cysteine 104, cysteine 107, cysteine 110, and cysteine 114 each coordinate [4Fe-4S] cluster.

This sequence belongs to the complex I 23 kDa subunit family. NDH is composed of at least 16 different subunits, 5 of which are encoded in the nucleus. [4Fe-4S] cluster is required as a cofactor.

The protein resides in the plastid. Its subcellular location is the chloroplast thylakoid membrane. The catalysed reaction is a plastoquinone + NADH + (n+1) H(+)(in) = a plastoquinol + NAD(+) + n H(+)(out). The enzyme catalyses a plastoquinone + NADPH + (n+1) H(+)(in) = a plastoquinol + NADP(+) + n H(+)(out). Its function is as follows. NDH shuttles electrons from NAD(P)H:plastoquinone, via FMN and iron-sulfur (Fe-S) centers, to quinones in the photosynthetic chain and possibly in a chloroplast respiratory chain. The immediate electron acceptor for the enzyme in this species is believed to be plastoquinone. Couples the redox reaction to proton translocation, and thus conserves the redox energy in a proton gradient. The chain is NAD(P)H-quinone oxidoreductase subunit I, chloroplastic from Daucus carota (Wild carrot).